Consider the following 375-residue polypeptide: Serpin B5 (375 aa).

Asparagine 99, asparagine 133, asparagine 188, and asparagine 361 each carry an N-linked (GlcNAc...) asparagine glycan.

The protein belongs to the serpin family. Ov-serpin subfamily. In terms of assembly, interacts with IRF6. Normal mammary epithelial cells.

Its subcellular location is the secreted. The protein resides in the extracellular space. Tumor suppressor. It blocks the growth, invasion, and metastatic properties of mammary tumors. As it does not undergo the S (stressed) to R (relaxed) conformational transition characteristic of active serpins, it exhibits no serine protease inhibitory activity. The chain is Serpin B5 (SERPINB5) from Homo sapiens (Human).